Here is a 131-residue protein sequence, read N- to C-terminus: Small ribosomal subunit protein uS8 (131 aa).

Belongs to the universal ribosomal protein uS8 family. In terms of assembly, part of the 30S ribosomal subunit. Contacts proteins S5 and S12.

Functionally, one of the primary rRNA binding proteins, it binds directly to 16S rRNA central domain where it helps coordinate assembly of the platform of the 30S subunit. This is Small ribosomal subunit protein uS8 from Chlorobium luteolum (strain DSM 273 / BCRC 81028 / 2530) (Pelodictyon luteolum).